Here is a 310-residue protein sequence, read N- to C-terminus: Isoflavone reductase homolog P3 (310 aa).

NADP(+) is bound by residues glycine 12 to glycine 18, arginine 37, and lysine 46. Catalysis depends on lysine 134, which acts as the Proton acceptor. Position 138 (arginine 138) interacts with NADP(+).

Belongs to the NmrA-type oxidoreductase family. Isoflavone reductase subfamily.

The protein resides in the cytoplasm. The sequence is that of Isoflavone reductase homolog P3 from Arabidopsis thaliana (Mouse-ear cress).